A 419-amino-acid polypeptide reads, in one-letter code: Ribosome biogenesis protein NOP53 (419 aa).

2 disordered regions span residues 1–21 and 233–283; these read MGIK…KNKR and KAFE…KIRQ. Positions 233–261 are enriched in basic and acidic residues; that stretch reads KAFEDKGLVSDQDVNHSIDSDDQSEHEQA. Residues Ser-242, Ser-249, Ser-252, and Ser-256 each carry the phosphoserine modification. Positions 269–283 are enriched in basic residues; that stretch reads KNKRKTRSQRNKIRQ.

The protein belongs to the NOP53 family.

The protein localises to the nucleus. It is found in the nucleolus. It localises to the nucleoplasm. Its function is as follows. May play a role in ribosome biogenesis. The protein is Ribosome biogenesis protein NOP53 of Schizosaccharomyces pombe (strain 972 / ATCC 24843) (Fission yeast).